The chain runs to 134 residues: MASLNLEIITPERVVLQAEAASVIAPGIQGYLGVLPEHAPLITPLQAGVVTCRRRERAEERVAVSGGFLEAGPDQVIILADTAERSEEIDVEWARQARERAERRLRERPPGLDVARAEAALRRAVARLKAAGAI.

It belongs to the ATPase epsilon chain family. As to quaternary structure, F-type ATPases have 2 components, CF(1) - the catalytic core - and CF(0) - the membrane proton channel. CF(1) has five subunits: alpha(3), beta(3), gamma(1), delta(1), epsilon(1). CF(0) has three main subunits: a, b and c. In this bacterium the a and b subunits are transcribed but do not seem to be translated, thus the ATP synthase consists of the alpha, beta, gamma, delta, epsilon and c subunits.

The protein localises to the cell membrane. Its function is as follows. Produces ATP from ADP in the presence of a proton gradient across the membrane. The chain is ATP synthase epsilon chain from Moorella thermoacetica (strain ATCC 39073 / JCM 9320).